The sequence spans 258 residues: Tryptophan synthase alpha chain (258 aa).

Residues E47 and D58 each act as proton acceptor in the active site.

It belongs to the TrpA family. In terms of assembly, tetramer of two alpha and two beta chains.

It catalyses the reaction (1S,2R)-1-C-(indol-3-yl)glycerol 3-phosphate + L-serine = D-glyceraldehyde 3-phosphate + L-tryptophan + H2O. It functions in the pathway amino-acid biosynthesis; L-tryptophan biosynthesis; L-tryptophan from chorismate: step 5/5. The alpha subunit is responsible for the aldol cleavage of indoleglycerol phosphate to indole and glyceraldehyde 3-phosphate. The polypeptide is Tryptophan synthase alpha chain (Bacillus cereus (strain ATCC 14579 / DSM 31 / CCUG 7414 / JCM 2152 / NBRC 15305 / NCIMB 9373 / NCTC 2599 / NRRL B-3711)).